The following is a 296-amino-acid chain: Phosphatidylglycerol--prolipoprotein diacylglyceryl transferase (296 aa).

3 consecutive transmembrane segments (helical) span residues 17 to 37 (LAVR…IVVG), 59 to 79 (MMFY…VLFY), and 97 to 117 (GGMS…LFAW). Arg-142 lines the a 1,2-diacyl-sn-glycero-3-phospho-(1'-sn-glycerol) pocket. Transmembrane regions (helical) follow at residues 230 to 250 (MGAI…TVEF) and 265 to 285 (LSMG…MMIW).

Belongs to the Lgt family.

The protein localises to the cell inner membrane. The enzyme catalyses L-cysteinyl-[prolipoprotein] + a 1,2-diacyl-sn-glycero-3-phospho-(1'-sn-glycerol) = an S-1,2-diacyl-sn-glyceryl-L-cysteinyl-[prolipoprotein] + sn-glycerol 1-phosphate + H(+). The protein operates within protein modification; lipoprotein biosynthesis (diacylglyceryl transfer). Its function is as follows. Catalyzes the transfer of the diacylglyceryl group from phosphatidylglycerol to the sulfhydryl group of the N-terminal cysteine of a prolipoprotein, the first step in the formation of mature lipoproteins. This is Phosphatidylglycerol--prolipoprotein diacylglyceryl transferase from Burkholderia pseudomallei (strain 668).